We begin with the raw amino-acid sequence, 245 residues long: Geranylgeranylglyceryl phosphate synthase (245 aa).

Mg(2+) is bound by residues Asp22 and Ser51. Sn-glycerol 1-phosphate is bound by residues 169 to 175, 200 to 201, and 222 to 223; these read YLEAGSG, GG, and GT.

The protein belongs to the GGGP/HepGP synthase family. Group II subfamily. In terms of assembly, homopentamer. Mg(2+) is required as a cofactor.

The protein localises to the cytoplasm. The catalysed reaction is sn-glycerol 1-phosphate + (2E,6E,10E)-geranylgeranyl diphosphate = sn-3-O-(geranylgeranyl)glycerol 1-phosphate + diphosphate. The protein operates within membrane lipid metabolism; glycerophospholipid metabolism. Inhibited by EDTA in vitro. Its function is as follows. Prenyltransferase that catalyzes the transfer of the geranylgeranyl moiety of geranylgeranyl diphosphate (GGPP) to the C3 hydroxyl of sn-glycerol-1-phosphate (G1P). This reaction is the first ether-bond-formation step in the biosynthesis of archaeal membrane lipids. Cannot use sn-glycerol-3-phosphate (G3P) or dihydroxyacetonephosphate (DHAP) as substrate. The polypeptide is Geranylgeranylglyceryl phosphate synthase (Methanothermobacter marburgensis (strain ATCC BAA-927 / DSM 2133 / JCM 14651 / NBRC 100331 / OCM 82 / Marburg) (Methanobacterium thermoautotrophicum)).